Consider the following 264-residue polypeptide: Glutamate racemase (264 aa).

Substrate-binding positions include 10–11 and 42–43; these read DS and YG. Cysteine 73 functions as the Proton donor/acceptor in the catalytic mechanism. 74-75 lines the substrate pocket; it reads NT. Cysteine 183 acts as the Proton donor/acceptor in catalysis. 184-185 lines the substrate pocket; it reads TH.

The protein belongs to the aspartate/glutamate racemases family.

It catalyses the reaction L-glutamate = D-glutamate. Its pathway is cell wall biogenesis; peptidoglycan biosynthesis. Functionally, provides the (R)-glutamate required for cell wall biosynthesis. The protein is Glutamate racemase of Streptococcus mutans serotype c (strain ATCC 700610 / UA159).